Here is a 282-residue protein sequence, read N- to C-terminus: Bifunctional protein FolD (282 aa).

NADP(+) is bound by residues 165–167 (GAS) and Ile-231.

This sequence belongs to the tetrahydrofolate dehydrogenase/cyclohydrolase family. As to quaternary structure, homodimer.

It carries out the reaction (6R)-5,10-methylene-5,6,7,8-tetrahydrofolate + NADP(+) = (6R)-5,10-methenyltetrahydrofolate + NADPH. The enzyme catalyses (6R)-5,10-methenyltetrahydrofolate + H2O = (6R)-10-formyltetrahydrofolate + H(+). It functions in the pathway one-carbon metabolism; tetrahydrofolate interconversion. Catalyzes the oxidation of 5,10-methylenetetrahydrofolate to 5,10-methenyltetrahydrofolate and then the hydrolysis of 5,10-methenyltetrahydrofolate to 10-formyltetrahydrofolate. The polypeptide is Bifunctional protein FolD (Francisella tularensis subsp. tularensis (strain FSC 198)).